A 478-amino-acid polypeptide reads, in one-letter code: UDP-N-acetylmuramate--L-alanine ligase (478 aa).

Position 130–136 (130–136 (GTHGKTT)) interacts with ATP.

The protein belongs to the MurCDEF family.

The protein localises to the cytoplasm. It carries out the reaction UDP-N-acetyl-alpha-D-muramate + L-alanine + ATP = UDP-N-acetyl-alpha-D-muramoyl-L-alanine + ADP + phosphate + H(+). The protein operates within cell wall biogenesis; peptidoglycan biosynthesis. Its function is as follows. Cell wall formation. In Microcystis aeruginosa (strain NIES-843 / IAM M-2473), this protein is UDP-N-acetylmuramate--L-alanine ligase.